A 354-amino-acid polypeptide reads, in one-letter code: GTPase Obg (354 aa).

The 159-residue stretch at 1-159 (MQFIDHAEIE…KQLRLELKLL (159 aa)) folds into the Obg domain. In terms of domain architecture, OBG-type G spans 160 to 328 (AEVGIIGLPN…LLQEIWDVLD (169 aa)). GTP is bound by residues 166 to 173 (GLPNAGKS), 191 to 195 (FTTLI), 213 to 216 (DIPG), 280 to 283 (NKLD), and 309 to 311 (SAV). Mg(2+) is bound by residues S173 and T193.

The protein belongs to the TRAFAC class OBG-HflX-like GTPase superfamily. OBG GTPase family. Monomer. It depends on Mg(2+) as a cofactor.

The protein resides in the cytoplasm. Functionally, an essential GTPase which binds GTP, GDP and possibly (p)ppGpp with moderate affinity, with high nucleotide exchange rates and a fairly low GTP hydrolysis rate. Plays a role in control of the cell cycle, stress response, ribosome biogenesis and in those bacteria that undergo differentiation, in morphogenesis control. The chain is GTPase Obg from Picosynechococcus sp. (strain ATCC 27264 / PCC 7002 / PR-6) (Agmenellum quadruplicatum).